The sequence spans 309 residues: MRHFLTLKDFTKEEILEMIELARSIKAQTKRREFVPYMENKTLAMIFEKSSTRTRVSFEVGIYQLGGIGLFLSKNDIQLGRGEPMKDTARVVSRICDMVMIRTYEQSKLEEFAAFSQVPVINGLTNEYHPVQLMADYLTMIEYGKADSPVVAYVGDGNNMTHSWLMLASKLGFTLRIATPKGYEPDPNIVEDAMRFAKESGATIELMHDPKAAVQDADVVTTDTWISMGQEEEKEKRIKDFKGFQVDTILMSLAKKDAIFLHCLPAYRGYEVSEEVFEAHAEEIFDEAENRLHAQKGIMVWLDRKRGES.

Carbamoyl phosphate is bound by residues 51-54, Q78, R102, and 129-132; these read STRT and HPVQ. L-ornithine contacts are provided by residues N159, D223, and 227-228; that span reads SM. Carbamoyl phosphate contacts are provided by residues 263 to 264 and R291; that span reads CL.

It belongs to the aspartate/ornithine carbamoyltransferase superfamily. OTCase family.

It is found in the cytoplasm. The catalysed reaction is carbamoyl phosphate + L-ornithine = L-citrulline + phosphate + H(+). It participates in amino-acid biosynthesis; L-arginine biosynthesis; L-arginine from L-ornithine and carbamoyl phosphate: step 1/3. In terms of biological role, reversibly catalyzes the transfer of the carbamoyl group from carbamoyl phosphate (CP) to the N(epsilon) atom of ornithine (ORN) to produce L-citrulline. The sequence is that of Ornithine carbamoyltransferase from Nitratiruptor sp. (strain SB155-2).